The sequence spans 123 residues: Large ribosomal subunit protein bL12 (123 aa).

This sequence belongs to the bacterial ribosomal protein bL12 family. As to quaternary structure, homodimer. Part of the ribosomal stalk of the 50S ribosomal subunit. Forms a multimeric L10(L12)X complex, where L10 forms an elongated spine to which 2 to 4 L12 dimers bind in a sequential fashion. Binds GTP-bound translation factors.

Forms part of the ribosomal stalk which helps the ribosome interact with GTP-bound translation factors. Is thus essential for accurate translation. The polypeptide is Large ribosomal subunit protein bL12 (Roseobacter denitrificans (strain ATCC 33942 / OCh 114) (Erythrobacter sp. (strain OCh 114))).